We begin with the raw amino-acid sequence, 142 residues long: MDVPEEVEKHIKITEEELSSAYLLLENGKLRDSISRAYYSMFHAAKALLLLKGIDPRKHSGVIRMFGLHFVNSGFIERVYAKYLTHSRSDQRLTMMSITNQVMRKLKTLLKVLSASWRELKVFWRRLKMDKKAQALNEFLKL.

It belongs to the UPF0332 family.

This is UPF0332 protein PH1297 from Pyrococcus horikoshii (strain ATCC 700860 / DSM 12428 / JCM 9974 / NBRC 100139 / OT-3).